The chain runs to 228 residues: MFFSLYERRQSLLHRAPPVAKVASFALLLLCCNAQSWCMHASLTLVLLALTLIVTRSLKCVAAHIRVVSIYLAFFFSLKILHTFFSTGVVSATQINQHIHAGYHIGIRLFLLLCASSLFYACTSRLELFSLCLRMGKVLHVRSTAYTTPCAVYVMMLVLYFGHDIFREWTELRFVWRARTRANTSFYNWVDATLHFSKTLLTRLLERAQHPSLRRADFKVSDNILSSE.

4 helical membrane-spanning segments follow: residues 37 to 54 (WCMH…TLIV), 67 to 89 (VVSI…STGV), 104 to 126 (HIGI…TSRL), and 138 to 160 (VLHV…LVLY).

The protein localises to the cell membrane. This is an uncharacterized protein from Treponema pallidum (strain Nichols).